Reading from the N-terminus, the 153-residue chain is Cytochrome c-554 (153 aa).

Positions 1 to 20 (MRPIPALALTFSLVAMPALA) are cleaved as a signal peptide. Gln-21 carries the post-translational modification Pyrrolidone carboxylic acid. Met-37, Cys-142, Cys-145, and His-146 together coordinate heme c.

Binds 1 heme c group covalently per subunit.

Its subcellular location is the periplasm. Monoheme c-type cytochrome, that is particularly expressed when cells generate energy via aerobic respiration. The sequence is that of Cytochrome c-554 (cycF) from Cereibacter sphaeroides (strain ATCC 17023 / DSM 158 / JCM 6121 / CCUG 31486 / LMG 2827 / NBRC 12203 / NCIMB 8253 / ATH 2.4.1.) (Rhodobacter sphaeroides).